Consider the following 39-residue polypeptide: Contryphan-Cal4 (39 aa).

The signal sequence occupies residues Met-1 to Ser-20. Cys-29 and Cys-35 form a disulfide bridge.

In terms of tissue distribution, expressed by the venom duct.

The protein localises to the secreted. Functionally, probable neurotoxin. This is Contryphan-Cal4 from Californiconus californicus (California cone).